The primary structure comprises 215 residues: Small ribosomal subunit protein uS3 (215 aa).

Residues 38–106 (LRAFLKKKLF…EVLIDIQEIR (69 aa)) form the KH type-2 domain.

It belongs to the universal ribosomal protein uS3 family. Part of the 30S ribosomal subunit. Forms a tight complex with proteins S10 and S14.

In terms of biological role, binds the lower part of the 30S subunit head. Binds mRNA in the 70S ribosome, positioning it for translation. The polypeptide is Small ribosomal subunit protein uS3 (Desulforapulum autotrophicum (strain ATCC 43914 / DSM 3382 / VKM B-1955 / HRM2) (Desulfobacterium autotrophicum)).